We begin with the raw amino-acid sequence, 147 residues long: Large ribosomal subunit protein bL9 (147 aa).

It belongs to the bacterial ribosomal protein bL9 family.

Functionally, binds to the 23S rRNA. The protein is Large ribosomal subunit protein bL9 of Mycoplasmoides gallisepticum (strain R(low / passage 15 / clone 2)) (Mycoplasma gallisepticum).